The primary structure comprises 423 residues: Polyglutamylase complex subunit TTLL1 (423 aa).

Residues 1 to 367 (MAGRVKWVTD…NGEIPDCKWN (367 aa)) form the TTL domain. ATP-binding positions include K138, 144–145 (QG), 181–184 (SLYI), and 194–196 (KFD). An a protein-binding site is contributed by Q144. L-glutamate is bound at residue R220. 241–242 (TN) is a binding site for ATP. L-glutamate is bound at residue K259. Residues D313, E326, and N328 each coordinate Mg(2+). K344 contacts L-glutamate. The segment at 390-423 (DGAERELRSRPGQPVGPRTGRSRDSGRNVLTTWK) is disordered.

This sequence belongs to the tubulin polyglutamylase family. Part of the neuronal tubulin polyglutamylase complex which contains TPGS1, TPGS2, TTLL1, LRRC49 and NICN1. Interacts with PCM1, CSTPP1 and LRRC49. Requires Mg(2+) as cofactor.

It localises to the cytoplasm. The protein localises to the cytoskeleton. It is found in the cilium basal body. Its subcellular location is the cilium axoneme. The protein resides in the cell projection. It localises to the cilium. The protein localises to the flagellum. It catalyses the reaction (L-glutamyl)(n)-gamma-L-glutamyl-L-glutamyl-[protein] + L-glutamate + ATP = (L-glutamyl)(n+1)-gamma-L-glutamyl-L-glutamyl-[protein] + ADP + phosphate + H(+). Catalytic subunit of a polyglutamylase complex which modifies tubulin, generating side chains of glutamate on the gamma-carboxyl group of specific glutamate residues within the C-terminal tail of tubulin. Probably involved in the side-chain elongation step of the polyglutamylation reaction rather than the initiation step. Modifies both alpha- and beta-tubulins with a preference for the alpha-tail. Unlike most polyglutamylases of the tubulin--tyrosine ligase family, only displays a catalytic activity when in complex with other proteins as it is most likely lacking domains important for autonomous activity. Part of the neuronal tubulin polyglutamylase complex. Mediates cilia and flagella polyglutamylation which is essential for their biogenesis and motility. Involved in respiratory motile cilia function through the regulation of beating asymmetry. Essential for sperm flagella biogenesis, motility and male fertility. Involved in KLF4 glutamylation which impedes its ubiquitination, thereby leading to somatic cell reprogramming, pluripotency maintenance and embryogenesis. The protein is Polyglutamylase complex subunit TTLL1 (Ttll1) of Rattus norvegicus (Rat).